Here is a 349-residue protein sequence, read N- to C-terminus: Flavonol synthase/flavanone 3-hydroxylase (349 aa).

Positions 213–310 constitute a Fe2OG dioxygenase domain; the sequence is DIVYMLKINY…RMSWPVFLEP (98 aa). His238, Asp240, and His291 together coordinate Fe cation.

This sequence belongs to the iron/ascorbate-dependent oxidoreductase family. Fe cation is required as a cofactor. It depends on L-ascorbate as a cofactor.

Its subcellular location is the cytoplasm. It catalyses the reaction a (2R,3R)-dihydroflavonol + 2-oxoglutarate + O2 = a flavonol + succinate + CO2 + H2O. The catalysed reaction is a (2S)-flavan-4-one + 2-oxoglutarate + O2 = a (2R,3R)-dihydroflavonol + succinate + CO2. Its pathway is secondary metabolite biosynthesis; flavonoid biosynthesis. Functionally, catalyzes the formation of flavonols from dihydroflavonols. It can act on dihydrokaempferol to produce kaempferol, on dihydroquercetin to produce quercitin and on dihydromyricetin to produce myricetin. The protein is Flavonol synthase/flavanone 3-hydroxylase of Solanum tuberosum (Potato).